Consider the following 23-residue polypeptide: Protein YsaE (23 aa).

This Escherichia coli (strain K12) protein is Protein YsaE.